A 316-amino-acid polypeptide reads, in one-letter code: Ribosomal RNA small subunit methyltransferase H (316 aa).

S-adenosyl-L-methionine contacts are provided by residues 35-37, Asp-55, Phe-84, Asp-105, and Gln-112; that span reads AGH.

The protein belongs to the methyltransferase superfamily. RsmH family.

It localises to the cytoplasm. The catalysed reaction is cytidine(1402) in 16S rRNA + S-adenosyl-L-methionine = N(4)-methylcytidine(1402) in 16S rRNA + S-adenosyl-L-homocysteine + H(+). In terms of biological role, specifically methylates the N4 position of cytidine in position 1402 (C1402) of 16S rRNA. This is Ribosomal RNA small subunit methyltransferase H from Streptococcus pneumoniae (strain Taiwan19F-14).